The chain runs to 536 residues: CTP synthase (536 aa).

An amidoligase domain region spans residues 1 to 267; it reads MTKFIFVTGG…DDIVIKRLEL (267 aa). CTP is bound at residue Ser-13. Ser-13 is a UTP binding site. 14 to 19 is a binding site for ATP; the sequence is SLGKGI. Tyr-54 contacts L-glutamine. Asp-71 lines the ATP pocket. Positions 71 and 141 each coordinate Mg(2+). Residues 148-150, 188-193, and Lys-224 contribute to the CTP site; these read DIE and KTKPTQ. UTP is bound by residues 188-193 and Lys-224; that span reads KTKPTQ. Position 240 to 242 (240 to 242) interacts with ATP; sequence RDA. The 243-residue stretch at 293–535 folds into the Glutamine amidotransferase type-1 domain; that stretch reads TIGLVGKYVS…IEASLNHQQS (243 aa). Gly-355 provides a ligand contact to L-glutamine. The active-site Nucleophile; for glutamine hydrolysis is Cys-382. Residues 383–386, Glu-406, and Arg-463 each bind L-glutamine; that span reads LGMQ. Active-site residues include His-508 and Glu-510.

It belongs to the CTP synthase family. Homotetramer.

It catalyses the reaction UTP + L-glutamine + ATP + H2O = CTP + L-glutamate + ADP + phosphate + 2 H(+). The enzyme catalyses L-glutamine + H2O = L-glutamate + NH4(+). It carries out the reaction UTP + NH4(+) + ATP = CTP + ADP + phosphate + 2 H(+). It functions in the pathway pyrimidine metabolism; CTP biosynthesis via de novo pathway; CTP from UDP: step 2/2. Its activity is regulated as follows. Allosterically activated by GTP, when glutamine is the substrate; GTP has no effect on the reaction when ammonia is the substrate. The allosteric effector GTP functions by stabilizing the protein conformation that binds the tetrahedral intermediate(s) formed during glutamine hydrolysis. Inhibited by the product CTP, via allosteric rather than competitive inhibition. Functionally, catalyzes the ATP-dependent amination of UTP to CTP with either L-glutamine or ammonia as the source of nitrogen. Regulates intracellular CTP levels through interactions with the four ribonucleotide triphosphates. This chain is CTP synthase, found in Staphylococcus saprophyticus subsp. saprophyticus (strain ATCC 15305 / DSM 20229 / NCIMB 8711 / NCTC 7292 / S-41).